The primary structure comprises 862 residues: MPAGLTEPAGAAPPAAVSASGTVTMAPAGALPVRVESTPVALGAVTKAPVSVCVEPTASQPLRSPVGTLVTKVAPVSAPPKVSSGPRLPAPQIVAVKAPNTTTIQFPANLQLPPGTVLIKSNSGPLMLVSPQQTVTRAETTSNITSRPAVPANPQTVKICTVPNSSSQLIKKVAVTPVKKLAQIGTTVVTTVPKPSSVQSVAVPTSVVTVTPGKPLNTVTTLKPSSLGASSTPSNEPNLKAENSAAVQINLSPTMLENVKKCKNFLAMLIKLACSGSQSPEMGQNVKKLVEQLLDAKIEAEEFTRKLYVELKSSPQPHLVPFLKKSVVALRQLLPNSQSFIQQCVQQTSSDMVIATCTTTVTTSPVVTTTVSSSQSEKSIIVSGATAPRTVSVQTLNPLAGPVGAKAGVVTLHSVGPTAATGGTTAGTGLLQTSKPLVTSVANTVTTVSLQPEKPVVSGTAVTLSLPAVTFGETSGAAICLPSVKPVVSSAGTTSDKPVIGTPVQIKLAQPGPVLSQPAGIPQAVQVKQLVVQQPSGGNEKQVTTISHSSTLTIQKCGQKTMPVNTIIPTSQFPPASILKQITLPGNKILSLQASPTQKNRIKENVTSCFRDEDDINDVTSMAGVNLNEENACILATNSELVGTLIQSCKDEPFLFIGALQKRILDIGKKHDITELNSDAVNLISQATQERLRGLLEKLTAIAQHRMTTYKASENYILCSDTRSQLKFLEKLDQLEKQRKDLEEREMLLKAAKSRSNKEDPEQLRLKQKAKELQQLELAQIQHRDANLTALAAIGPRKKRPLESGIEGLKDNLLASGTSSLTATKQLHRPRITRICLRDLIFCMEQEREMKYSRALYLALLK.

Residues 100 to 241 are sufficient for interaction with ZNF628; that stretch reads NTTTIQFPAN…TPSNEPNLKA (142 aa). Positions 219-237 are enriched in polar residues; it reads VTTLKPSSLGASSTPSNEP. A disordered region spans residues 219-239; that stretch reads VTTLKPSSLGASSTPSNEPNL. One can recognise a TAFH domain in the interval 256-353; it reads LENVKKCKNF…CVQQTSSDMV (98 aa). The tract at residues 511–533 is required for interaction with P65/RELA; sequence PGPVLSQPAGIPQAVQVKQLVVQ. A Nuclear export signal motif is present at residues 516–556; it reads SQPAGIPQAVQVKQLVVQQPSGGNEKQVTTISHSSTLTIQK. S595 carries the post-translational modification Phosphoserine. Residues 653–702 enclose the Histone-fold domain; it reads PFLFIGALQKRILDIGKKHDITELNSDAVNLISQATQERLRGLLEKLTAI. Positions 722–787 form a coiled coil; that stretch reads TRSQLKFLEK…LAQIQHRDAN (66 aa). The interval 830–862 is required for interaction with TAF12; that stretch reads PRITRICLRDLIFCMEQEREMKYSRALYLALLK.

This sequence belongs to the TAF4 family. TFIID is composed of TATA binding protein (TBP) and a number of TBP-associated factors (TAFs). Heterodimerizes with TAF12/TFII20 via the C-terminal H2A-like histone-fold domain. This heterodimer forms a histone-like octamer with the TAF6/TAFII70-TAF9/TAFII31 heterodimer. Interacts with P65/RELA homodimers and P65/RELA-REL heterodimers. Interaction with POU2AF1, via its C-terminal activation domain, is required for octamer-dependent transcription. Interacts with ZNF628. Post-translationally, under stimulation by forskolin, Isoform 1 is phosphorylated by protein kinase A (PKA). As to expression, preferentially expressed in ovarian granulosa cells (at protein level). Highly expressed in B-cells.

The protein localises to the nucleus. The protein resides in the cytoplasm. Functionally, cell type-specific subunit of the general transcription factor TFIID that may function as a gene-selective coactivator in certain cells. TFIID is a multimeric protein complex that plays a central role in mediating promoter responses to various activators and repressors. TAF4B is a transcriptional coactivator of the p65/RELA NF-kappa-B subunit. Involved in the activation of a subset of antiapoptotic genes including TNFAIP3. May be involved in regulating folliculogenesis. Through interaction with OCBA/POU2AF1, acts as a coactivator of B-cell-specific transcription. Plays a role in spermiogenesis and oogenesis. This is Transcription initiation factor TFIID subunit 4B (TAF4B) from Homo sapiens (Human).